We begin with the raw amino-acid sequence, 316 residues long: Olfactory receptor 8J1 (316 aa).

Residues Met1 to Ile25 lie on the Extracellular side of the membrane. N-linked (GlcNAc...) asparagine glycosylation is present at Asn5. The helical transmembrane segment at Pro26 to Ile46 threads the bilayer. The Cytoplasmic segment spans residues Thr47–Arg54. Residues Leu55–Thr75 form a helical membrane-spanning segment. The Extracellular portion of the chain corresponds to Val76–Thr99. Residues Cys97 and Cys189 are joined by a disulfide bond. Residues Gln100 to Tyr120 traverse the membrane as a helical segment. At Asp121–Arg139 the chain is on the cytoplasmic side. Residues Leu140 to Ser160 traverse the membrane as a helical segment. Residues Ser161–Thr197 lie on the Extracellular side of the membrane. The helical transmembrane segment at Val198–Ser217 threads the bilayer. The Cytoplasmic portion of the chain corresponds to Tyr218–Ala237. Residues Phe238–Met258 traverse the membrane as a helical segment. At Tyr259–Asp272 the chain is on the extracellular side. A helical transmembrane segment spans residues Lys273–Leu293. The Cytoplasmic portion of the chain corresponds to Arg294–Met316.

It belongs to the G-protein coupled receptor 1 family.

The protein resides in the cell membrane. In terms of biological role, odorant receptor. The protein is Olfactory receptor 8J1 (OR8J1) of Homo sapiens (Human).